The chain runs to 379 residues: Tryptophan 2,3-dioxygenase (379 aa).

Residues 57-61 and Arg128 each bind substrate; that span reads FIITH. Position 312 (His312) interacts with heme. Thr327 is a binding site for substrate.

This sequence belongs to the tryptophan 2,3-dioxygenase family. In terms of assembly, homotetramer. Dimer of dimers. It depends on heme as a cofactor.

It carries out the reaction L-tryptophan + O2 = N-formyl-L-kynurenine. The protein operates within amino-acid degradation; L-tryptophan degradation via kynurenine pathway; L-kynurenine from L-tryptophan: step 1/2. It functions in the pathway pigment biosynthesis; ommochrome biosynthesis. Functionally, heme-dependent dioxygenase that catalyzes the oxidative cleavage of the L-tryptophan (L-Trp) pyrrole ring and converts L-tryptophan to N-formyl-L-kynurenine. Catalyzes the oxidative cleavage of the indole moiety. This Drosophila yakuba (Fruit fly) protein is Tryptophan 2,3-dioxygenase.